The sequence spans 186 residues: Transcription factor pgmR (186 aa).

The segment at residues 19 to 46 (CDECGAAKLKCDRGHPSCGRCISLGLKC) is a DNA-binding region (zn(2)-C6 fungal-type). Residues 52–98 (RKAGKPRRDAQSATRPPPTPGDSGPPLDYNSFGPTSPPSSVGDGATL) are disordered.

The protein resides in the nucleus. Transcription factor that specifically regulates the expression of the pgm gene cluster that mediates the biosynthesis of cryptic naphthoquinones derived pigments responsible for the coloration of the fruiting bodies. This is Transcription factor pgmR from Aspergillus terreus (strain NIH 2624 / FGSC A1156).